The sequence spans 295 residues: MITELHGIDIRENEPLKHYTYTKVGGPADFLAFPRNHYELSRIVAYANKENMPWLVLGNASNLIVRDGGIRGFVIMFDKLNAVHLNGYTLEAEAGANLIETTKIAKFHSLTGFEFACGIPGSIGGAVFMNAGAYGGEISHIFLSAKVLTSSGEIKTISARDMAFGYRHSAIQETGDIVISAKFALKPGNYDTISQEMNRLNHLRQLKQPLEFPSCGSVFKRPPGHFAGQLIMEANLKGHRIGGVEVSEKHAGFMINVADGTAKDYEDLIAYVIETVENHSGVRLEPEVRIIGENL.

In terms of domain architecture, FAD-binding PCMH-type spans 23 to 188 (KVGGPADFLA…ISAKFALKPG (166 aa)). Arg-167 is an active-site residue. The active-site Proton donor is Ser-217. Residue Glu-287 is part of the active site.

This sequence belongs to the MurB family. Requires FAD as cofactor.

It is found in the cytoplasm. It carries out the reaction UDP-N-acetyl-alpha-D-muramate + NADP(+) = UDP-N-acetyl-3-O-(1-carboxyvinyl)-alpha-D-glucosamine + NADPH + H(+). The protein operates within cell wall biogenesis; peptidoglycan biosynthesis. Cell wall formation. The sequence is that of UDP-N-acetylenolpyruvoylglucosamine reductase from Streptococcus pyogenes serotype M6 (strain ATCC BAA-946 / MGAS10394).